The following is a 403-amino-acid chain: Imidazolonepropionase (403 aa).

Residues H68 and H70 each contribute to the Fe(3+) site. Zn(2+) contacts are provided by H68 and H70. Residues R77, Y140, and H173 each contribute to the 4-imidazolone-5-propanoate site. Residue Y140 participates in N-formimidoyl-L-glutamate binding. H238 contacts Fe(3+). H238 lines the Zn(2+) pocket. Q241 is a binding site for 4-imidazolone-5-propanoate. Fe(3+) is bound at residue D313. Zn(2+) is bound at residue D313. Positions 315 and 317 each coordinate N-formimidoyl-L-glutamate. S318 lines the 4-imidazolone-5-propanoate pocket.

Belongs to the metallo-dependent hydrolases superfamily. HutI family. Zn(2+) serves as cofactor. The cofactor is Fe(3+).

It is found in the cytoplasm. It catalyses the reaction 4-imidazolone-5-propanoate + H2O = N-formimidoyl-L-glutamate. The protein operates within amino-acid degradation; L-histidine degradation into L-glutamate; N-formimidoyl-L-glutamate from L-histidine: step 3/3. Its function is as follows. Catalyzes the hydrolytic cleavage of the carbon-nitrogen bond in imidazolone-5-propanoate to yield N-formimidoyl-L-glutamate. It is the third step in the universal histidine degradation pathway. The chain is Imidazolonepropionase from Hahella chejuensis (strain KCTC 2396).